Here is a 942-residue protein sequence, read N- to C-terminus: Probable serine/threonine-protein kinase DDB_G0279719 (942 aa).

The region spanning 4–617 (YEVVKLIGVG…IDLILQNKLF (614 aa)) is the Protein kinase domain. ATP-binding positions include 10 to 18 (IGVGGEAKA) and lysine 33. 4 disordered regions span residues 109-170 (NNNQ…INNN), 247-303 (SFSN…NGNT), 352-371 (QPPQSTSTSKTDSSPTGADV), and 408-445 (NDPSSHSQPQHQQLHSSPQQLPQSPRLKPNIESSLNIN). A compositionally biased stretch (low complexity) spans 258–272 (NSNDSNLHQSSSNSS). Residues 288–303 (SPGTSTPYQKGSNGNT) show a composition bias toward polar residues. 2 stretches are compositionally biased toward low complexity: residues 353–367 (PPQSTSTSKTDSSPT) and 410–432 (PSSHSQPQHQQLHSSPQQLPQSP). The active-site Proton acceptor is aspartate 487. Residues 642–686 (TNSKSNSSNNLNNSNSNNDIINNNNNNNSSNNINNNNIVNLNNSY) are disordered. The stretch at 675 to 703 (NNNNIVNLNNSYNNKQDKCEQRNKSLNQN) forms a coiled coil.

It belongs to the protein kinase superfamily. Ser/Thr protein kinase family.

The catalysed reaction is L-seryl-[protein] + ATP = O-phospho-L-seryl-[protein] + ADP + H(+). It catalyses the reaction L-threonyl-[protein] + ATP = O-phospho-L-threonyl-[protein] + ADP + H(+). The polypeptide is Probable serine/threonine-protein kinase DDB_G0279719 (Dictyostelium discoideum (Social amoeba)).